A 58-amino-acid polypeptide reads, in one-letter code: Large ribosomal subunit protein uL30 (58 aa).

The protein belongs to the universal ribosomal protein uL30 family. As to quaternary structure, part of the 50S ribosomal subunit.

This is Large ribosomal subunit protein uL30 from Pelobacter propionicus (strain DSM 2379 / NBRC 103807 / OttBd1).